Consider the following 455-residue polypeptide: Ribosomal protein uS12 methylthiotransferase RimO (455 aa).

The 111-residue stretch at P30–P140 folds into the MTTase N-terminal domain. [4Fe-4S] cluster-binding residues include C39, C75, C104, C171, C175, and C178. The Radical SAM core domain maps to L157–A386. In terms of domain architecture, TRAM spans A389–V455.

It belongs to the methylthiotransferase family. RimO subfamily. [4Fe-4S] cluster is required as a cofactor.

The protein localises to the cytoplasm. The enzyme catalyses L-aspartate(89)-[ribosomal protein uS12]-hydrogen + (sulfur carrier)-SH + AH2 + 2 S-adenosyl-L-methionine = 3-methylsulfanyl-L-aspartate(89)-[ribosomal protein uS12]-hydrogen + (sulfur carrier)-H + 5'-deoxyadenosine + L-methionine + A + S-adenosyl-L-homocysteine + 2 H(+). Functionally, catalyzes the methylthiolation of an aspartic acid residue of ribosomal protein uS12. This chain is Ribosomal protein uS12 methylthiotransferase RimO, found in Cereibacter sphaeroides (strain ATCC 17029 / ATH 2.4.9) (Rhodobacter sphaeroides).